Here is an 84-residue protein sequence, read N- to C-terminus: MPIIKSAIKRVKTTEKANAKNSSQLSKMRTAVKKFEKAKTAGADNVEQLFNEAVSAIDKAQSKGLIKANKAARDKSRMAARLAK.

Belongs to the bacterial ribosomal protein bS20 family.

Binds directly to 16S ribosomal RNA. The polypeptide is Small ribosomal subunit protein bS20 (Ligilactobacillus salivarius (strain UCC118) (Lactobacillus salivarius)).